The sequence spans 387 residues: Exodeoxyribonuclease 7 large subunit (387 aa).

This sequence belongs to the XseA family. In terms of assembly, heterooligomer composed of large and small subunits.

The protein resides in the cytoplasm. The enzyme catalyses Exonucleolytic cleavage in either 5'- to 3'- or 3'- to 5'-direction to yield nucleoside 5'-phosphates.. Functionally, bidirectionally degrades single-stranded DNA into large acid-insoluble oligonucleotides, which are then degraded further into small acid-soluble oligonucleotides. In Campylobacter jejuni subsp. jejuni serotype O:6 (strain 81116 / NCTC 11828), this protein is Exodeoxyribonuclease 7 large subunit.